Consider the following 138-residue polypeptide: Protein NrdI (138 aa).

This sequence belongs to the NrdI family.

In terms of biological role, probably involved in ribonucleotide reductase function. This Beutenbergia cavernae (strain ATCC BAA-8 / DSM 12333 / CCUG 43141 / JCM 11478 / NBRC 16432 / NCIMB 13614 / HKI 0122) protein is Protein NrdI.